A 153-amino-acid polypeptide reads, in one-letter code: Mitotic-spindle organizing protein 2 (153 aa).

A disordered region spans residues 80 to 153 (KVSETSTGDA…SSSSSQLTSN (74 aa)). Composition is skewed to polar residues over residues 81–99 (VSET…TAVP) and 107–133 (KMSS…SATR). Over residues 134 to 153 (GQKSTKSSGSSSSSSQLTSN) the composition is skewed to low complexity.

Belongs to the MOZART2 family. In terms of assembly, part of the gamma-tubulin complex. Interacts with TUBG1.

The protein localises to the cytoplasm. It localises to the cytoskeleton. It is found in the microtubule organizing center. Its subcellular location is the centrosome. The protein resides in the spindle. The protein is Mitotic-spindle organizing protein 2 (mzt2) of Danio rerio (Zebrafish).